The following is a 173-amino-acid chain: uncharacterized protein (173 aa).

The 170-residue stretch at 2–171 (VTVREAKLED…PDLSALKTLL (170 aa)) folds into the N-acetyltransferase domain.

The protein belongs to the acetyltransferase family.

This is an uncharacterized protein from Bacillus subtilis (strain 168).